The chain runs to 343 residues: Glycerol-3-phosphate dehydrogenase [NAD(P)+] (343 aa).

NADPH is bound by residues Ser-22, Tyr-23, His-43, and Lys-117. Residues Lys-117, Gly-146, and Thr-148 each contribute to the sn-glycerol 3-phosphate site. Ala-150 serves as a coordination point for NADPH. Positions 202, 255, 265, 266, and 267 each coordinate sn-glycerol 3-phosphate. Lys-202 serves as the catalytic Proton acceptor. Arg-266 serves as a coordination point for NADPH. Residues Val-290 and Glu-292 each contribute to the NADPH site.

Belongs to the NAD-dependent glycerol-3-phosphate dehydrogenase family.

It localises to the cytoplasm. It carries out the reaction sn-glycerol 3-phosphate + NAD(+) = dihydroxyacetone phosphate + NADH + H(+). It catalyses the reaction sn-glycerol 3-phosphate + NADP(+) = dihydroxyacetone phosphate + NADPH + H(+). It functions in the pathway membrane lipid metabolism; glycerophospholipid metabolism. In terms of biological role, catalyzes the reduction of the glycolytic intermediate dihydroxyacetone phosphate (DHAP) to sn-glycerol 3-phosphate (G3P), the key precursor for phospholipid synthesis. This is Glycerol-3-phosphate dehydrogenase [NAD(P)+] from Aliivibrio fischeri (strain ATCC 700601 / ES114) (Vibrio fischeri).